Reading from the N-terminus, the 615-residue chain is Protein ENHANCED DISEASE RESISTANCE 4 (615 aa).

Disordered regions lie at residues 46–271 (IAPS…DDDE), 292–336 (YKEQ…GRQG), and 549–592 (THDI…RGSP). Composition is skewed to polar residues over residues 63–89 (NEPQSVPETNNVSSSSGQDTVLPSSPG) and 119–129 (GDGTNEIQEQE). Residues 104–129 (MESTEKELDDLELSNGDGTNEIQEQE) adopt a coiled-coil conformation. Residues 134–148 (DSEKNEREDNSRLES) show a composition bias toward basic and acidic residues. Residues 159–168 (GSGSSSGSLS) show a composition bias toward low complexity. Polar residues-rich tracts occupy residues 296–314 (GASSSSPFSENRRNGITTY) and 552–564 (INANRNSNSTSES). Positions 565-577 (PIDKAPSKPEKLR) are enriched in basic and acidic residues.

As to quaternary structure, interacts with RLK902. Binds and recruits EDR1 at the powdery mildew (e.g. G.cichoracearum) penetration site on the plasma membrane. Interacts with CHC2. As to expression, expressed in stems and rosette leaves, and weakly in inflorescences. Not detected in roots.

It localises to the cell membrane. The protein localises to the endosome. Plays a negative role in salicylic acid (SA)-mediated resistance to powdery mildew (e.g. Golovinomyces cichoracearum). May modulate plant immunity by regulating the relocation of EDR1 by interacting with CHC2 and modulating endocytosis. This is Protein ENHANCED DISEASE RESISTANCE 4 from Arabidopsis thaliana (Mouse-ear cress).